A 216-amino-acid polypeptide reads, in one-letter code: Redox-sensing transcriptional repressor Rex 1 (216 aa).

The segment at residues 16–55 (LYYRYLRMLHDTGKNKVSSTELSEAVQVDSATIRRDFSYF) is a DNA-binding region (H-T-H motif). 90–95 (GVGNLG) contacts NAD(+).

Belongs to the transcriptional regulatory Rex family. Homodimer.

It is found in the cytoplasm. Modulates transcription in response to changes in cellular NADH/NAD(+) redox state. In Enterococcus faecalis (strain ATCC 700802 / V583), this protein is Redox-sensing transcriptional repressor Rex 1.